The sequence spans 276 residues: Putative E3 ubiquitin-protein ligase SINA-like 9 (276 aa).

The RING-type zinc finger occupies 38-74 (CPICCEALTSPIFQCDNGHLACGSCCPKLSNKCPACT). The segment at 88–274 (VLESILIPCP…MQVFIIENVD (187 aa)) is SBD. An SIAH-type zinc finger spans residues 91 to 149 (SILIPCPNVRFGCTKSFFYGKESAHEKECIFSQCSCPSSVCDYTGSYKDLYAHYKLTHS). Positions 96, 103, 115, 119, 126, 131, 143, and 148 each coordinate Zn(2+).

The protein belongs to the SINA (Seven in absentia) family.

It catalyses the reaction S-ubiquitinyl-[E2 ubiquitin-conjugating enzyme]-L-cysteine + [acceptor protein]-L-lysine = [E2 ubiquitin-conjugating enzyme]-L-cysteine + N(6)-ubiquitinyl-[acceptor protein]-L-lysine.. The protein operates within protein modification; protein ubiquitination. Functionally, E3 ubiquitin-protein ligase that mediates ubiquitination and subsequent proteasomal degradation of target proteins. E3 ubiquitin ligases accept ubiquitin from an E2 ubiquitin-conjugating enzyme in the form of a thioester and then directly transfers the ubiquitin to targeted substrates. It probably triggers the ubiquitin-mediated degradation of different substrates. The protein is Putative E3 ubiquitin-protein ligase SINA-like 9 of Arabidopsis thaliana (Mouse-ear cress).